Consider the following 837-residue polypeptide: SLIT and NTRK-like protein 4 (837 aa).

Positions Met-1–Ala-18 are cleaved as a signal peptide. The Extracellular segment spans residues Asp-19–Ser-618. LRR repeat units follow at residues Asn-60–Asn-81, His-84–Gly-105, Ala-108–Gly-129, Asn-132–Lys-153, Lys-156–Phe-177, and Ser-179–Glu-200. A glycan (N-linked (GlcNAc...) asparagine) is linked at Asn-81. An LRRCT 1 domain is found at Asn-213 to Met-264. N-linked (GlcNAc...) asparagine glycosylation occurs at Asn-325. One can recognise an LRRNT domain in the interval Gln-333–Lys-375. 6 LRR repeats span residues Asn-378 to Glu-399, Gly-402 to Asn-423, Asn-426 to Gly-447, Asn-450 to Ser-471, Asn-474 to Gly-495, and Pro-497 to Asp-518. Asn-423 is a glycosylation site (N-linked (GlcNAc...) asparagine). The LRRCT 2 domain occupies Asn-531–Lys-582. Residues Ile-619–Leu-639 traverse the membrane as a helical segment. Topologically, residues Val-640 to Ile-837 are cytoplasmic.

It belongs to the SLITRK family. Interacts (via LRR 1 and 2 repeats) with PTPRD (via extracellular domain). In terms of tissue distribution, in the adult, significant expression is detected only in the brain. Broadly expressed in embryonic brain with highest expression in subventricular zone, subplate, cortical plate, pyramidal cell layer of hippocampus, thalamus and hypothalamus.

It localises to the membrane. Its subcellular location is the cell membrane. It is involved in synaptogenesis and promotes synapse differentiation. Suppresses neurite outgrowth. This is SLIT and NTRK-like protein 4 (Slitrk4) from Mus musculus (Mouse).